Reading from the N-terminus, the 276-residue chain is Shikimate dehydrogenase (NADP(+)) (276 aa).

Residues 19–21 and Thr-66 each bind shikimate; that span reads SKS. The active-site Proton acceptor is Lys-70. Asp-82 is a binding site for NADP(+). Residues Asn-91 and Asp-107 each contribute to the shikimate site. Residues 133 to 137, 157 to 162, and Leu-222 each bind NADP(+); these read GAGGA and NRTRSR. Tyr-224 is a binding site for shikimate. Gly-245 provides a ligand contact to NADP(+).

The protein belongs to the shikimate dehydrogenase family. Homodimer.

It catalyses the reaction shikimate + NADP(+) = 3-dehydroshikimate + NADPH + H(+). The protein operates within metabolic intermediate biosynthesis; chorismate biosynthesis; chorismate from D-erythrose 4-phosphate and phosphoenolpyruvate: step 4/7. Involved in the biosynthesis of the chorismate, which leads to the biosynthesis of aromatic amino acids. Catalyzes the reversible NADPH linked reduction of 3-dehydroshikimate (DHSA) to yield shikimate (SA). This Ruegeria sp. (strain TM1040) (Silicibacter sp.) protein is Shikimate dehydrogenase (NADP(+)).